The following is a 452-amino-acid chain: Probable glycine dehydrogenase (decarboxylating) subunit 1 (452 aa).

This sequence belongs to the GcvP family. N-terminal subunit subfamily. As to quaternary structure, the glycine cleavage system is composed of four proteins: P, T, L and H. In this organism, the P 'protein' is a heterodimer of two subunits.

The catalysed reaction is N(6)-[(R)-lipoyl]-L-lysyl-[glycine-cleavage complex H protein] + glycine + H(+) = N(6)-[(R)-S(8)-aminomethyldihydrolipoyl]-L-lysyl-[glycine-cleavage complex H protein] + CO2. Its function is as follows. The glycine cleavage system catalyzes the degradation of glycine. The P protein binds the alpha-amino group of glycine through its pyridoxal phosphate cofactor; CO(2) is released and the remaining methylamine moiety is then transferred to the lipoamide cofactor of the H protein. The polypeptide is Probable glycine dehydrogenase (decarboxylating) subunit 1 (Alcanivorax borkumensis (strain ATCC 700651 / DSM 11573 / NCIMB 13689 / SK2)).